Reading from the N-terminus, the 576-residue chain is uncharacterized protein (576 aa).

Topologically, residues methionine 1–alanine 8 are cytoplasmic. Residues isoleucine 9–valine 29 form a helical membrane-spanning segment. Residues alanine 30 to asparagine 45 lie on the Extracellular side of the membrane. Residues methionine 46–tryptophan 66 form a helical membrane-spanning segment. The Cytoplasmic segment spans residues arginine 67–glutamate 71. A helical transmembrane segment spans residues isoleucine 72–phenylalanine 92. The Extracellular segment spans residues threonine 93–phenylalanine 103. Residues phenylalanine 104–isoleucine 124 traverse the membrane as a helical segment. At glutamine 125 to glycine 141 the chain is on the cytoplasmic side. A helical membrane pass occupies residues valine 142 to tryptophan 162. Topologically, residues arginine 163–serine 400 are extracellular. A helical membrane pass occupies residues leucine 401–threonine 421. The Cytoplasmic portion of the chain corresponds to threonine 422–asparagine 437. Residues phenylalanine 438–leucine 458 traverse the membrane as a helical segment. Residues glycine 459–lysine 476 lie on the Extracellular side of the membrane. The chain crosses the membrane as a helical span at residues serine 477 to valine 497. Residues asparagine 498 to lysine 512 lie on the Cytoplasmic side of the membrane. The chain crosses the membrane as a helical span at residues phenylalanine 513–phenylalanine 533. The Extracellular portion of the chain corresponds to tyrosine 534 to asparagine 545. A helical membrane pass occupies residues cysteine 546–valine 566. Topologically, residues threonine 567 to valine 576 are cytoplasmic.

Belongs to the auxin efflux carrier (TC 2.A.69) family.

It is found in the membrane. This is an uncharacterized protein from Saccharomyces cerevisiae (strain ATCC 204508 / S288c) (Baker's yeast).